We begin with the raw amino-acid sequence, 43 residues long: Protein PsbN (43 aa).

Residues 7-29 (VAIFLSGLLVSFTGYALYTAFGQ) form a helical membrane-spanning segment.

Belongs to the PsbN family.

It localises to the plastid. The protein resides in the chloroplast thylakoid membrane. May play a role in photosystem I and II biogenesis. The chain is Protein PsbN from Draba nemorosa (Woodland whitlowgrass).